We begin with the raw amino-acid sequence, 510 residues long: 2,3-bisphosphoglycerate-independent phosphoglycerate mutase (510 aa).

Mn(2+) contacts are provided by Asp13 and Ser63. Ser63 serves as the catalytic Phosphoserine intermediate. Substrate is bound by residues His124, 154-155, Arg186, Arg192, 262-265, and Lys334; these read RD and RADR. Residues Asp401, His405, Asp442, His443, and His461 each coordinate Mn(2+).

This sequence belongs to the BPG-independent phosphoglycerate mutase family. As to quaternary structure, monomer. Mn(2+) serves as cofactor.

The catalysed reaction is (2R)-2-phosphoglycerate = (2R)-3-phosphoglycerate. The protein operates within carbohydrate degradation; glycolysis; pyruvate from D-glyceraldehyde 3-phosphate: step 3/5. In terms of biological role, catalyzes the interconversion of 2-phosphoglycerate and 3-phosphoglycerate. The polypeptide is 2,3-bisphosphoglycerate-independent phosphoglycerate mutase (Vibrio atlanticus (strain LGP32) (Vibrio splendidus (strain Mel32))).